The chain runs to 296 residues: uncharacterized protein (296 aa).

Positions 1 to 20 are cleaved as a signal peptide; it reads MKKALGILAILLILVGGYFA.

This is an uncharacterized protein from Aquifex aeolicus (strain VF5).